We begin with the raw amino-acid sequence, 226 residues long: 2,3-bisphosphoglycerate-dependent phosphoglycerate mutase (226 aa).

Substrate contacts are provided by residues R8–N15, T21–G22, R58, E109–Y112, K120, R136–R137, and G180–N181. The active-site Tele-phosphohistidine intermediate is the H9. The active-site Proton donor/acceptor is E109.

The protein belongs to the phosphoglycerate mutase family. BPG-dependent PGAM subfamily.

The catalysed reaction is (2R)-2-phosphoglycerate = (2R)-3-phosphoglycerate. It participates in carbohydrate degradation; glycolysis; pyruvate from D-glyceraldehyde 3-phosphate: step 3/5. Its function is as follows. Catalyzes the interconversion of 2-phosphoglycerate and 3-phosphoglycerate. The sequence is that of 2,3-bisphosphoglycerate-dependent phosphoglycerate mutase from Chlamydia muridarum (strain MoPn / Nigg).